Consider the following 361-residue polypeptide: 3-dehydroquinate synthase (361 aa).

NAD(+) is bound by residues 71-76 (DGEQNK), 105-109 (GVIGD), 129-130 (TT), Lys-142, Lys-151, and 169-172 (CLNT). Zn(2+) contacts are provided by Glu-184, His-247, and His-264.

It belongs to the sugar phosphate cyclases superfamily. Dehydroquinate synthase family. The cofactor is Co(2+). Zn(2+) is required as a cofactor. NAD(+) serves as cofactor.

The protein resides in the cytoplasm. It carries out the reaction 7-phospho-2-dehydro-3-deoxy-D-arabino-heptonate = 3-dehydroquinate + phosphate. The protein operates within metabolic intermediate biosynthesis; chorismate biosynthesis; chorismate from D-erythrose 4-phosphate and phosphoenolpyruvate: step 2/7. In terms of biological role, catalyzes the conversion of 3-deoxy-D-arabino-heptulosonate 7-phosphate (DAHP) to dehydroquinate (DHQ). This chain is 3-dehydroquinate synthase, found in Sodalis glossinidius (strain morsitans).